Here is a 1225-residue protein sequence, read N- to C-terminus: Structural maintenance of chromosomes protein 1 (1225 aa).

Residue 33–40 participates in ATP binding; that stretch reads GPNGSGKS. A coiled-coil region spans residues 173–489; that stretch reads SGSIQYKKEY…SANNQEYDLN (317 aa). One can recognise an SMC hinge domain in the interval 527 to 641; the sequence is PGVKGLVHDL…CNTLNIAKDL (115 aa). Residues 679–1063 are a coiled coil; the sequence is KEEYQSLMSL…LKIKKKRKEL (385 aa). Residues 1057-1061 carry the Nuclear localization signal motif; that stretch reads KKKRK.

This sequence belongs to the SMC family. SMC1 subfamily. In terms of assembly, cohesin complexes are composed of the SMC1 and SMC3 heterodimer attached via their SMC hinge domain, MCD1/SCC1 which link them, and IRR1/SCC3, which interacts with MCD1. The cohesin complex also interacts with SCC2, which is required for its association with chromosomes.

The protein resides in the nucleus. It localises to the chromosome. Functionally, involved in chromosome cohesion during cell cycle and in DNA repair. Central component of cohesin complex. The cohesin complex is required for the cohesion of sister chromatids after DNA replication. The cohesin complex apparently forms a large proteinaceous ring within which sister chromatids can be trapped. At anaphase, the complex is cleaved and dissociates from chromatin, allowing sister chromatids to segregate. The polypeptide is Structural maintenance of chromosomes protein 1 (SMC1) (Saccharomyces cerevisiae (strain ATCC 204508 / S288c) (Baker's yeast)).